A 175-amino-acid chain; its full sequence is Protein-export protein SecB (175 aa).

The protein belongs to the SecB family. In terms of assembly, homotetramer, a dimer of dimers. One homotetramer interacts with 1 SecA dimer.

The protein localises to the cytoplasm. Functionally, one of the proteins required for the normal export of preproteins out of the cell cytoplasm. It is a molecular chaperone that binds to a subset of precursor proteins, maintaining them in a translocation-competent state. It also specifically binds to its receptor SecA. This is Protein-export protein SecB from Ehrlichia chaffeensis (strain ATCC CRL-10679 / Arkansas).